The sequence spans 253 residues: HTH-type transcriptional regulator AdiY (253 aa).

An HTH araC/xylS-type domain is found at 149-246 (DSVYQIIESD…GMTPLHYVSQ (98 aa)). DNA-binding regions (H-T-H motif) lie at residues 166 to 187 (SMVASCLCLSPSLLKKKLKSEN) and 213 to 236 (ISQVSQSCGYNSTSYFISVFKDFY).

The chain is HTH-type transcriptional regulator AdiY (adiY) from Escherichia coli (strain K12).